We begin with the raw amino-acid sequence, 863 residues long: Paramyosin (863 aa).

The tract at residues 1-18 (MSESHVKISRTIIRGTSP) is nonhelical region. A coiled-coil region spans residues 19-836 (STVRLESRVR…ERTITIKRTI (818 aa)). The nonhelical region stretch occupies residues 837–863 (GGPGSRAVSVVREINSVSRGNRATSIM).

Belongs to the paramyosin family. As to quaternary structure, homodimer or monomer in secreted form.

The protein resides in the cytoplasm. It localises to the myofibril. It is found in the secreted. In terms of biological role, paramyosin is a major structural component of many thick filaments isolated from invertebrate muscles. It is a prominent antigen in human cysticercosis, may have a role as a modulator of the host immune response. It is able to bind collagen and has complement inhibitor activity. This Taenia solium (Pork tapeworm) protein is Paramyosin (PMY).